The sequence spans 290 residues: Nucleotide-binding protein BAV3158 (290 aa).

Residue 9-16 (GISGSGKS) coordinates ATP. 58–61 (DVRS) contributes to the GTP binding site.

It belongs to the RapZ-like family.

Its function is as follows. Displays ATPase and GTPase activities. This is Nucleotide-binding protein BAV3158 from Bordetella avium (strain 197N).